Here is a 268-residue protein sequence, read N- to C-terminus: Lipopolysaccharide core heptose(I) kinase WaaP (268 aa).

Tyr-30, Tyr-48, and Tyr-98 each carry phosphotyrosine; by autocatalysis. Asp-163 is a catalytic residue. Residues Tyr-165, Tyr-211, Tyr-231, Tyr-258, and Tyr-264 each carry the phosphotyrosine; by autocatalysis modification.

This sequence belongs to the protein kinase superfamily. KdkA/RfaP family. As to quaternary structure, interacts with acyl-AcpP. The WaaP hydrophobic channel can accommodate acyl chains of different lengths, but myristyl-ACP is likely its physiological binding partner. It depends on Mg(2+) as a cofactor.

The protein resides in the cytoplasm. It catalyses the reaction an L-alpha-D-Hep-(1-&gt;3)-L-alpha-D-Hep-(1-&gt;5)-[alpha-Kdo-(2-&gt;4)]-alpha-Kdo-(2-&gt;6)-lipid A + ATP = an L-alpha-D-Hep-(1-&gt;3)-4-O-phospho-L-alpha-D-Hep-(1-&gt;5)-[alpha-Kdo-(2-&gt;4)]-alpha-Kdo-(2-&gt;6)-lipid A + ADP + H(+). The enzyme catalyses L-tyrosyl-[protein] + ATP = O-phospho-L-tyrosyl-[protein] + ADP + H(+). It functions in the pathway bacterial outer membrane biogenesis; LPS core biosynthesis. With respect to regulation, acylated-acyl carrier protein (acyl-ACP) acts as a very tightly bound cofactor necessary for the production and stability of active WaaP kinase. In terms of biological role, kinase involved in the biosynthesis of the core oligosaccharide region of lipopolysaccharide (LPS). Catalyzes the phosphorylation of heptose I (HepI), the first heptose added to the Kdo2-lipid A module. Also has protein-tyrosine kinase activity: autophosphorylates on all Tyr residues; in vitro can phosphorylate poly(Glu,Tyr). In Pseudomonas aeruginosa (strain ATCC 15692 / DSM 22644 / CIP 104116 / JCM 14847 / LMG 12228 / 1C / PRS 101 / PAO1), this protein is Lipopolysaccharide core heptose(I) kinase WaaP.